We begin with the raw amino-acid sequence, 101 residues long: Small ribosomal subunit protein uS14 (101 aa).

It belongs to the universal ribosomal protein uS14 family. Part of the 30S ribosomal subunit. Contacts proteins S3 and S10.

Binds 16S rRNA, required for the assembly of 30S particles and may also be responsible for determining the conformation of the 16S rRNA at the A site. The sequence is that of Small ribosomal subunit protein uS14 from Escherichia coli O139:H28 (strain E24377A / ETEC).